The chain runs to 273 residues: Diaminopimelate epimerase (273 aa).

Substrate is bound by residues N11 and N60. The Proton donor role is filled by C69. Residues 70-71 (GN), N181, and 199-200 (ER) contribute to the substrate site. The active-site Proton acceptor is the C209. Position 210-211 (210-211 (GT)) interacts with substrate.

It belongs to the diaminopimelate epimerase family. In terms of assembly, homodimer.

It is found in the cytoplasm. It catalyses the reaction (2S,6S)-2,6-diaminopimelate = meso-2,6-diaminopimelate. Its pathway is amino-acid biosynthesis; L-lysine biosynthesis via DAP pathway; DL-2,6-diaminopimelate from LL-2,6-diaminopimelate: step 1/1. Its function is as follows. Catalyzes the stereoinversion of LL-2,6-diaminopimelate (L,L-DAP) to meso-diaminopimelate (meso-DAP), a precursor of L-lysine and an essential component of the bacterial peptidoglycan. This is Diaminopimelate epimerase from Helicobacter pylori (strain HPAG1).